We begin with the raw amino-acid sequence, 79 residues long: Probable [Fe-S]-dependent transcriptional repressor (79 aa).

Positions 54, 59, 62, and 68 each coordinate iron-sulfur cluster.

It belongs to the FeoC family.

Its function is as follows. May function as a transcriptional regulator that controls feoABC expression. The chain is Probable [Fe-S]-dependent transcriptional repressor from Photorhabdus laumondii subsp. laumondii (strain DSM 15139 / CIP 105565 / TT01) (Photorhabdus luminescens subsp. laumondii).